A 367-amino-acid polypeptide reads, in one-letter code: Probable butyrate kinase (367 aa).

The protein belongs to the acetokinase family.

It is found in the cytoplasm. It catalyses the reaction butanoate + ATP = butanoyl phosphate + ADP. The sequence is that of Probable butyrate kinase from Bacillus cereus (strain G9842).